Consider the following 500-residue polypeptide: Maturase K (500 aa).

The protein belongs to the intron maturase 2 family. MatK subfamily.

It is found in the plastid. The protein localises to the chloroplast. Usually encoded in the trnK tRNA gene intron. Probably assists in splicing its own and other chloroplast group II introns. The chain is Maturase K from Adiantum capillus-veneris (Maidenhair fern).